Here is a 202-residue protein sequence, read N- to C-terminus: Superoxide dismutase [Mn] (202 aa).

Residues His27, His82, Asp164, and His168 each contribute to the Mn(2+) site.

It belongs to the iron/manganese superoxide dismutase family. In terms of assembly, homodimer. Mn(2+) is required as a cofactor.

It carries out the reaction 2 superoxide + 2 H(+) = H2O2 + O2. Functionally, destroys superoxide anion radicals which are normally produced within the cells and which are toxic to biological systems. The chain is Superoxide dismutase [Mn] (sodA) from Listeria innocua serovar 6a (strain ATCC BAA-680 / CLIP 11262).